A 521-amino-acid polypeptide reads, in one-letter code: Biotinidase (521 aa).

Positions 1 to 25 (MSGARTAHALVFLLGCSALALGVCS) are cleaved as a signal peptide. The 280-residue stretch at 50–329 (NPLELSSRQQ…QGLVGTENTT (280 aa)) folds into the CN hydrolase domain. Residue Glu90 is the Proton acceptor of the active site. N-linked (GlcNAc...) asparagine glycans are attached at residues Asn128 and Asn181. The Proton donor role is filled by Lys190. Cys223 functions as the Nucleophile in the catalytic mechanism. Residue Asn380 is glycosylated (N-linked (GlcNAc...) asparagine).

Belongs to the carbon-nitrogen hydrolase superfamily. BTD/VNN family.

Its subcellular location is the secreted. The protein localises to the extracellular space. It carries out the reaction biocytin + H2O = biotin + L-lysine. The catalysed reaction is biotin amide + H2O = biotin + NH4(+). Functionally, catalytic release of biotin from biocytin, the product of biotin-dependent carboxylases degradation. The chain is Biotinidase from Rattus norvegicus (Rat).